A 260-amino-acid polypeptide reads, in one-letter code: tRNA pseudouridine synthase A (260 aa).

The active-site Nucleophile is the aspartate 60. Tyrosine 118 is a binding site for substrate.

It belongs to the tRNA pseudouridine synthase TruA family. Homodimer.

It carries out the reaction uridine(38/39/40) in tRNA = pseudouridine(38/39/40) in tRNA. Functionally, formation of pseudouridine at positions 38, 39 and 40 in the anticodon stem and loop of transfer RNAs. This Leuconostoc citreum (strain KM20) protein is tRNA pseudouridine synthase A.